A 229-amino-acid polypeptide reads, in one-letter code: Adenylate kinase (229 aa).

Residues 1–9 (MLSTLAKRF) constitute a propeptide that is removed on maturation. 25–30 (GVGKGT) lines the ATP pocket. The tract at residues 45-74 (STGDALRAEIRGQTPLGKRVKGIIESGGLV) is NMP. AMP-binding positions include T46, R51, 72–74 (GLV), 100–103 (GIPR), and Q107. Residues 141–178 (GRLFHPGSGRVYHKVTNPPKKPMTDDITGEPLIIRKDD) are LID. An ATP-binding site is contributed by R142. Residues R175 and R186 each contribute to the AMP site. G214 is a binding site for ATP.

This sequence belongs to the adenylate kinase family.

The protein localises to the hydrogenosome. The enzyme catalyses AMP + ATP = 2 ADP. Functionally, catalyzes the reversible transfer of the terminal phosphate group between ATP and AMP. Plays an important role in cellular energy homeostasis and in adenine nucleotide metabolism. This Trichomonas vaginalis protein is Adenylate kinase.